The sequence spans 281 residues: tRNA uridine(34) hydroxylase (281 aa).

The Rhodanese domain occupies Ser121–Gly214. Catalysis depends on Cys174, which acts as the Cysteine persulfide intermediate.

This sequence belongs to the TrhO family.

It catalyses the reaction uridine(34) in tRNA + AH2 + O2 = 5-hydroxyuridine(34) in tRNA + A + H2O. Functionally, catalyzes oxygen-dependent 5-hydroxyuridine (ho5U) modification at position 34 in tRNAs. In Wolbachia pipientis subsp. Culex pipiens (strain wPip), this protein is tRNA uridine(34) hydroxylase.